The sequence spans 237 residues: Pyridoxine 5'-phosphate synthase (237 aa).

The 3-amino-2-oxopropyl phosphate site is built by Asn7 and Arg18. The active-site Proton acceptor is the His43. 2 residues coordinate 1-deoxy-D-xylulose 5-phosphate: Arg45 and His50. Glu70 (proton acceptor) is an active-site residue. Thr100 provides a ligand contact to 1-deoxy-D-xylulose 5-phosphate. Residue His190 is the Proton donor of the active site. Residues Asp191 and 213–214 contribute to the 3-amino-2-oxopropyl phosphate site; that span reads GH.

It belongs to the PNP synthase family. In terms of assembly, homooctamer; tetramer of dimers.

The protein localises to the cytoplasm. The enzyme catalyses 3-amino-2-oxopropyl phosphate + 1-deoxy-D-xylulose 5-phosphate = pyridoxine 5'-phosphate + phosphate + 2 H2O + H(+). It participates in cofactor biosynthesis; pyridoxine 5'-phosphate biosynthesis; pyridoxine 5'-phosphate from D-erythrose 4-phosphate: step 5/5. In terms of biological role, catalyzes the complicated ring closure reaction between the two acyclic compounds 1-deoxy-D-xylulose-5-phosphate (DXP) and 3-amino-2-oxopropyl phosphate (1-amino-acetone-3-phosphate or AAP) to form pyridoxine 5'-phosphate (PNP) and inorganic phosphate. In Christiangramia forsetii (strain DSM 17595 / CGMCC 1.15422 / KT0803) (Gramella forsetii), this protein is Pyridoxine 5'-phosphate synthase.